The sequence spans 466 residues: Probable fibrosin-1 (466 aa).

K8 is covalently cross-linked (Glycyl lysine isopeptide (Lys-Gly) (interchain with G-Cter in SUMO2)). 2 positions are modified to asymmetric dimethylarginine: R229 and R239. Disordered regions lie at residues 236–315 (AWVR…AAAA) and 410–466 (LLYS…RADR). Over residues 248–272 (GSDKERPMERREPSVTKEEKDRDLP) the composition is skewed to basic and acidic residues. The residue at position 281 (S281) is a Phosphoserine. Positions 288 to 311 (RAGEEGARPAKESVRVKEERKEEA) are enriched in basic and acidic residues. The segment covering 442 to 459 (APPPLVPAPRPSSPPRAP) has biased composition (pro residues).

This Mus musculus (Mouse) protein is Probable fibrosin-1 (Fbrs).